A 755-amino-acid polypeptide reads, in one-letter code: Photosystem I P700 chlorophyll a apoprotein A1 (755 aa).

Helical transmembrane passes span 72 to 95 (IFSA…YHGA), 158 to 181 (LLCT…FHYH), 197 to 221 (LNHH…HVAI), 297 to 315 (QAHH…GHMY), 352 to 375 (WHAQ…QHMY), 391 to 417 (ISLF…IYMV), 439 to 461 (AIIS…FYVH), and 536 to 554 (FMVH…LILL). [4Fe-4S] cluster is bound by residues Cys-578 and Cys-587. Transmembrane regions (helical) follow at residues 594 to 615 (HVFL…HFSW) and 669 to 691 (LSAY…MFLF). Residue His-680 participates in chlorophyll a' binding. 2 residues coordinate chlorophyll a: Met-688 and Tyr-696. A phylloquinone-binding site is contributed by Trp-697. Residues 729 to 749 (AVGVAHYLLGGIVTTWAFFLA) form a helical membrane-spanning segment.

It belongs to the PsaA/PsaB family. As to quaternary structure, the PsaA/B heterodimer binds the P700 chlorophyll special pair and subsequent electron acceptors. PSI consists of a core antenna complex that captures photons, and an electron transfer chain that converts photonic excitation into a charge separation. The cyanobacterial PSI reaction center is composed of one copy each of PsaA,B,C,D,E,F,I,J,K,L,M and X, and forms trimeric complexes. PSI electron transfer chain: 5 chlorophyll a, 1 chlorophyll a', 2 phylloquinones and 3 4Fe-4S clusters. PSI core antenna: 90 chlorophyll a, 22 carotenoids, 3 phospholipids and 1 galactolipid. P700 is a chlorophyll a/chlorophyll a' dimer, A0 is one or more chlorophyll a, A1 is one or both phylloquinones and FX is a shared 4Fe-4S iron-sulfur center. is required as a cofactor.

The protein localises to the cellular thylakoid membrane. It carries out the reaction reduced [plastocyanin] + hnu + oxidized [2Fe-2S]-[ferredoxin] = oxidized [plastocyanin] + reduced [2Fe-2S]-[ferredoxin]. Its function is as follows. PsaA and PsaB bind P700, the primary electron donor of photosystem I (PSI), as well as the electron acceptors A0, A1 and FX. PSI is a plastocyanin/cytochrome c6-ferredoxin oxidoreductase, converting photonic excitation into a charge separation, which transfers an electron from the donor P700 chlorophyll pair to the spectroscopically characterized acceptors A0, A1, FX, FA and FB in turn. Oxidized P700 is reduced on the lumenal side of the thylakoid membrane by plastocyanin or cytochrome c6. The chain is Photosystem I P700 chlorophyll a apoprotein A1 from Synechococcus sp. (strain JA-3-3Ab) (Cyanobacteria bacterium Yellowstone A-Prime).